The chain runs to 369 residues: 3 beta-hydroxysteroid dehydrogenase type 7 (369 aa).

The active-site Proton acceptor is the Tyr159. NAD(+) is bound at residue Lys163. The next 2 helical transmembrane spans lie at 289–309 (LLPY…QWLL) and 311–331 (PLVL…NTTF).

The protein belongs to the 3-beta-HSD family.

It localises to the endoplasmic reticulum membrane. It carries out the reaction 7alpha-hydroxycholesterol + NAD(+) = 7alpha-hydroxycholest-4-en-3-one + NADH + H(+). The catalysed reaction is 7alpha,25-dihydroxycholesterol + NAD(+) = 7alpha,25-dihydroxy-4-cholesten-3-one + NADH + H(+). The enzyme catalyses (25R)-cholest-5-en-3beta,7alpha,26-triol + NAD(+) = (25R)-7alpha,26-dihydroxycholest-4-en-3-one + NADH + H(+). It catalyses the reaction (24S)-7alpha-dihydroxycholesterol + NAD(+) = (24S)-7alpha,24-dihydroxycholest-4-en-3-one + NADH + H(+). The protein operates within lipid metabolism; steroid biosynthesis. Its function is as follows. The 3-beta-HSD enzymatic system plays a crucial role in the biosynthesis of all classes of hormonal steroids. HSD VII is active against four 7-alpha-hydroxylated sterols. Does not metabolize several different C(19/21) steroids as substrates. Involved in bile acid synthesis. Plays a key role in cell positioning and movement in lymphoid tissues by mediating degradation of 7-alpha,25-dihydroxycholesterol (7-alpha,25-OHC): 7-alpha,25-OHC acts as a ligand for the G protein-coupled receptor GPR183/EBI2, a chemotactic receptor for a number of lymphoid cells. The chain is 3 beta-hydroxysteroid dehydrogenase type 7 from Homo sapiens (Human).